The sequence spans 233 residues: Biosynthetic peptidoglycan transglycosylase (233 aa).

A helical membrane pass occupies residues 8 to 28 (LIALPVGIFIFFNAYVYGNII).

This sequence belongs to the glycosyltransferase 51 family.

The protein localises to the cell inner membrane. The enzyme catalyses [GlcNAc-(1-&gt;4)-Mur2Ac(oyl-L-Ala-gamma-D-Glu-L-Lys-D-Ala-D-Ala)](n)-di-trans,octa-cis-undecaprenyl diphosphate + beta-D-GlcNAc-(1-&gt;4)-Mur2Ac(oyl-L-Ala-gamma-D-Glu-L-Lys-D-Ala-D-Ala)-di-trans,octa-cis-undecaprenyl diphosphate = [GlcNAc-(1-&gt;4)-Mur2Ac(oyl-L-Ala-gamma-D-Glu-L-Lys-D-Ala-D-Ala)](n+1)-di-trans,octa-cis-undecaprenyl diphosphate + di-trans,octa-cis-undecaprenyl diphosphate + H(+). The protein operates within cell wall biogenesis; peptidoglycan biosynthesis. Functionally, peptidoglycan polymerase that catalyzes glycan chain elongation from lipid-linked precursors. This chain is Biosynthetic peptidoglycan transglycosylase, found in Neisseria gonorrhoeae (strain NCCP11945).